Reading from the N-terminus, the 170-residue chain is Acireductone dioxygenase (170 aa).

4 residues coordinate Fe(2+): His99, His101, Glu105, and His144. Ni(2+)-binding residues include His99, His101, Glu105, and His144.

The protein belongs to the acireductone dioxygenase (ARD) family. Monomer. The cofactor is Fe(2+). It depends on Ni(2+) as a cofactor.

The enzyme catalyses 1,2-dihydroxy-5-(methylsulfanyl)pent-1-en-3-one + O2 = 3-(methylsulfanyl)propanoate + CO + formate + 2 H(+). It catalyses the reaction 1,2-dihydroxy-5-(methylsulfanyl)pent-1-en-3-one + O2 = 4-methylsulfanyl-2-oxobutanoate + formate + 2 H(+). The protein operates within amino-acid biosynthesis; L-methionine biosynthesis via salvage pathway; L-methionine from S-methyl-5-thio-alpha-D-ribose 1-phosphate: step 5/6. Catalyzes 2 different reactions between oxygen and the acireductone 1,2-dihydroxy-3-keto-5-methylthiopentene (DHK-MTPene) depending upon the metal bound in the active site. Fe-containing acireductone dioxygenase (Fe-ARD) produces formate and 2-keto-4-methylthiobutyrate (KMTB), the alpha-ketoacid precursor of methionine in the methionine recycle pathway. Ni-containing acireductone dioxygenase (Ni-ARD) produces methylthiopropionate, carbon monoxide and formate, and does not lie on the methionine recycle pathway. In Bacillus cytotoxicus (strain DSM 22905 / CIP 110041 / 391-98 / NVH 391-98), this protein is Acireductone dioxygenase.